An 82-amino-acid chain; its full sequence is Vejovine (82 aa).

A signal peptide spans 1–22 (MNAKTLFVVFLIGMLVTEQVEA). Residues 70–82 (MTLDEIVDAMYYD) constitute a propeptide that is removed on maturation.

This sequence belongs to the non-disulfide-bridged peptide (NDBP) superfamily. Long chain multifunctional peptide (group 2) family. Expressed by the venom gland.

The protein localises to the secreted. The protein resides in the target cell membrane. Functionally, displays significant potent antimicrobial activity against clinical isolates of Gram-negative multidrug resistant strains of E.coli, P.aeruginosa and A.baumanii with MIC values as low as 4.4 uM. Additionally, it displays low cytolytic and hemolytic activity against human erythrocytes reaching 50% hemolysis at 100 uM. The sequence is that of Vejovine from Vaejovis mexicanus (Mexican scorpion).